A 138-amino-acid polypeptide reads, in one-letter code: Sec-independent protein translocase protein TatB (138 aa).

Residues S2–G18 form a helical membrane-spanning segment. The tract at residues N109–V138 is disordered. Positions T118–V138 are enriched in basic and acidic residues.

This sequence belongs to the TatB family. In terms of assembly, the Tat system comprises two distinct complexes: a TatABC complex, containing multiple copies of TatA, TatB and TatC subunits, and a separate TatA complex, containing only TatA subunits. Substrates initially bind to the TatABC complex, which probably triggers association of the separate TatA complex to form the active translocon.

It is found in the cell inner membrane. Its function is as follows. Part of the twin-arginine translocation (Tat) system that transports large folded proteins containing a characteristic twin-arginine motif in their signal peptide across membranes. Together with TatC, TatB is part of a receptor directly interacting with Tat signal peptides. TatB may form an oligomeric binding site that transiently accommodates folded Tat precursor proteins before their translocation. In Campylobacter jejuni subsp. jejuni serotype O:2 (strain ATCC 700819 / NCTC 11168), this protein is Sec-independent protein translocase protein TatB.